Consider the following 409-residue polypeptide: Arginine biosynthesis bifunctional protein ArgJ (409 aa).

Positions 165, 191, 202, 282, 404, and 409 each coordinate substrate. The active-site Nucleophile is the Thr-202.

Belongs to the ArgJ family. As to quaternary structure, heterotetramer of two alpha and two beta chains.

It localises to the cytoplasm. It catalyses the reaction N(2)-acetyl-L-ornithine + L-glutamate = N-acetyl-L-glutamate + L-ornithine. The enzyme catalyses L-glutamate + acetyl-CoA = N-acetyl-L-glutamate + CoA + H(+). It functions in the pathway amino-acid biosynthesis; L-arginine biosynthesis; L-ornithine and N-acetyl-L-glutamate from L-glutamate and N(2)-acetyl-L-ornithine (cyclic): step 1/1. The protein operates within amino-acid biosynthesis; L-arginine biosynthesis; N(2)-acetyl-L-ornithine from L-glutamate: step 1/4. Functionally, catalyzes two activities which are involved in the cyclic version of arginine biosynthesis: the synthesis of N-acetylglutamate from glutamate and acetyl-CoA as the acetyl donor, and of ornithine by transacetylation between N(2)-acetylornithine and glutamate. The sequence is that of Arginine biosynthesis bifunctional protein ArgJ from Parasynechococcus marenigrum (strain WH8102).